We begin with the raw amino-acid sequence, 256 residues long: Hydroxyacylglutathione hydrolase (256 aa).

Zn(2+) is bound by residues H55, H57, D59, H60, H113, D130, and H168.

It belongs to the metallo-beta-lactamase superfamily. Glyoxalase II family. Monomer. Requires Zn(2+) as cofactor.

It carries out the reaction an S-(2-hydroxyacyl)glutathione + H2O = a 2-hydroxy carboxylate + glutathione + H(+). It functions in the pathway secondary metabolite metabolism; methylglyoxal degradation; (R)-lactate from methylglyoxal: step 2/2. In terms of biological role, thiolesterase that catalyzes the hydrolysis of S-D-lactoyl-glutathione to form glutathione and D-lactic acid. In Psychromonas ingrahamii (strain DSM 17664 / CCUG 51855 / 37), this protein is Hydroxyacylglutathione hydrolase.